The primary structure comprises 354 residues: Holliday junction branch migration complex subunit RuvB (354 aa).

The interval 1 to 22 (MTLQTDDFAPAPARRVVSAAPA) is disordered. The interval 5 to 194 (TDDFAPAPAR…FGIVARLEFY (190 aa)) is large ATPase domain (RuvB-L). Residues 9–22 (APAPARRVVSAAPA) show a composition bias toward low complexity. Residues L33, R34, G75, K78, T79, T80, 141-143 (EDY), R184, Y194, and R231 each bind ATP. A Mg(2+)-binding site is contributed by T79. The small ATPAse domain (RuvB-S) stretch occupies residues 195–265 (SAQELARIVK…IAERALAMLD (71 aa)). The head domain (RuvB-H) stretch occupies residues 268–354 (PEGLDVMDRK…GAQAPGLFAV (87 aa)). Residues R323 and R328 each coordinate DNA.

It belongs to the RuvB family. Homohexamer. Forms an RuvA(8)-RuvB(12)-Holliday junction (HJ) complex. HJ DNA is sandwiched between 2 RuvA tetramers; dsDNA enters through RuvA and exits via RuvB. An RuvB hexamer assembles on each DNA strand where it exits the tetramer. Each RuvB hexamer is contacted by two RuvA subunits (via domain III) on 2 adjacent RuvB subunits; this complex drives branch migration. In the full resolvosome a probable DNA-RuvA(4)-RuvB(12)-RuvC(2) complex forms which resolves the HJ.

The protein localises to the cytoplasm. It catalyses the reaction ATP + H2O = ADP + phosphate + H(+). The RuvA-RuvB-RuvC complex processes Holliday junction (HJ) DNA during genetic recombination and DNA repair, while the RuvA-RuvB complex plays an important role in the rescue of blocked DNA replication forks via replication fork reversal (RFR). RuvA specifically binds to HJ cruciform DNA, conferring on it an open structure. The RuvB hexamer acts as an ATP-dependent pump, pulling dsDNA into and through the RuvAB complex. RuvB forms 2 homohexamers on either side of HJ DNA bound by 1 or 2 RuvA tetramers; 4 subunits per hexamer contact DNA at a time. Coordinated motions by a converter formed by DNA-disengaged RuvB subunits stimulates ATP hydrolysis and nucleotide exchange. Immobilization of the converter enables RuvB to convert the ATP-contained energy into a lever motion, pulling 2 nucleotides of DNA out of the RuvA tetramer per ATP hydrolyzed, thus driving DNA branch migration. The RuvB motors rotate together with the DNA substrate, which together with the progressing nucleotide cycle form the mechanistic basis for DNA recombination by continuous HJ branch migration. Branch migration allows RuvC to scan DNA until it finds its consensus sequence, where it cleaves and resolves cruciform DNA. This Verminephrobacter eiseniae (strain EF01-2) protein is Holliday junction branch migration complex subunit RuvB.